The following is a 199-amino-acid chain: N-(5'-phosphoribosyl)anthranilate isomerase (199 aa).

This sequence belongs to the TrpF family.

The enzyme catalyses N-(5-phospho-beta-D-ribosyl)anthranilate = 1-(2-carboxyphenylamino)-1-deoxy-D-ribulose 5-phosphate. The protein operates within amino-acid biosynthesis; L-tryptophan biosynthesis; L-tryptophan from chorismate: step 3/5. This chain is N-(5'-phosphoribosyl)anthranilate isomerase, found in Lacticaseibacillus paracasei (strain ATCC 334 / BCRC 17002 / CCUG 31169 / CIP 107868 / KCTC 3260 / NRRL B-441) (Lactobacillus paracasei).